The sequence spans 233 residues: Uridylate kinase (233 aa).

Residue 9 to 10 (GS) coordinates ATP. UMP is bound at residue glycine 43. Residues glycine 44 and arginine 48 each contribute to the ATP site. Residues aspartate 65 and 113–119 (VTPGQTT) contribute to the UMP site. ATP contacts are provided by threonine 139, tyrosine 145, and aspartate 148.

This sequence belongs to the UMP kinase family. In terms of assembly, homohexamer.

The protein resides in the cytoplasm. It catalyses the reaction UMP + ATP = UDP + ADP. Its pathway is pyrimidine metabolism; CTP biosynthesis via de novo pathway; UDP from UMP (UMPK route): step 1/1. Its activity is regulated as follows. Inhibited by UTP. Its function is as follows. Catalyzes the reversible phosphorylation of UMP to UDP. The protein is Uridylate kinase of Methanosarcina barkeri (strain Fusaro / DSM 804).